The primary structure comprises 97 residues: Large ribosomal subunit protein bL28 (97 aa).

Belongs to the bacterial ribosomal protein bL28 family.

This is Large ribosomal subunit protein bL28 from Rickettsia rickettsii (strain Iowa).